The chain runs to 593 residues: 2-succinyl-5-enolpyruvyl-6-hydroxy-3-cyclohexene-1-carboxylate synthase (593 aa).

The protein belongs to the TPP enzyme family. MenD subfamily. Homodimer. It depends on Mg(2+) as a cofactor. Mn(2+) serves as cofactor. The cofactor is thiamine diphosphate.

The enzyme catalyses isochorismate + 2-oxoglutarate + H(+) = 5-enolpyruvoyl-6-hydroxy-2-succinyl-cyclohex-3-ene-1-carboxylate + CO2. It participates in quinol/quinone metabolism; 1,4-dihydroxy-2-naphthoate biosynthesis; 1,4-dihydroxy-2-naphthoate from chorismate: step 2/7. It functions in the pathway quinol/quinone metabolism; menaquinone biosynthesis. Catalyzes the thiamine diphosphate-dependent decarboxylation of 2-oxoglutarate and the subsequent addition of the resulting succinic semialdehyde-thiamine pyrophosphate anion to isochorismate to yield 2-succinyl-5-enolpyruvyl-6-hydroxy-3-cyclohexene-1-carboxylate (SEPHCHC). This chain is 2-succinyl-5-enolpyruvyl-6-hydroxy-3-cyclohexene-1-carboxylate synthase, found in Pelodictyon phaeoclathratiforme (strain DSM 5477 / BU-1).